The chain runs to 259 residues: Small ribosomal subunit protein mS23 (259 aa).

Over residues 230 to 244 the composition is skewed to polar residues; the sequence is RAASFTGSALPSSEE. The disordered stretch occupies residues 230 to 259; sequence RAASFTGSALPSSEESAPVDEETEKVPQQV.

It belongs to the mitochondrion-specific ribosomal protein mS23 family. In terms of assembly, component of the mitochondrial small ribosomal subunit.

The protein resides in the mitochondrion. In Aspergillus terreus (strain NIH 2624 / FGSC A1156), this protein is Small ribosomal subunit protein mS23 (rsm25).